Reading from the N-terminus, the 330-residue chain is ADP-L-glycero-D-manno-heptose-6-epimerase (330 aa).

Residues F11–I12, D32–N33, K39, K54, E75–S79, and N92 contribute to the NADP(+) site. Residue Y139 is the Proton acceptor of the active site. Residue K143 coordinates NADP(+). N168 is a binding site for substrate. NADP(+) is bound by residues V169 and K177. The Proton acceptor role is filled by K177. Substrate is bound by residues R179, H186, F200–Y203, R213, and Y292.

It belongs to the NAD(P)-dependent epimerase/dehydratase family. HldD subfamily. As to quaternary structure, homopentamer. It depends on NADP(+) as a cofactor.

It catalyses the reaction ADP-D-glycero-beta-D-manno-heptose = ADP-L-glycero-beta-D-manno-heptose. It functions in the pathway nucleotide-sugar biosynthesis; ADP-L-glycero-beta-D-manno-heptose biosynthesis; ADP-L-glycero-beta-D-manno-heptose from D-glycero-beta-D-manno-heptose 7-phosphate: step 4/4. Its function is as follows. Catalyzes the interconversion between ADP-D-glycero-beta-D-manno-heptose and ADP-L-glycero-beta-D-manno-heptose via an epimerization at carbon 6 of the heptose. This is ADP-L-glycero-D-manno-heptose-6-epimerase from Paraburkholderia phytofirmans (strain DSM 17436 / LMG 22146 / PsJN) (Burkholderia phytofirmans).